The following is an 80-amino-acid chain: Putative membrane protein insertion efficiency factor (80 aa).

Belongs to the UPF0161 family.

It localises to the cell inner membrane. In terms of biological role, could be involved in insertion of integral membrane proteins into the membrane. This chain is Putative membrane protein insertion efficiency factor, found in Kosmotoga olearia (strain ATCC BAA-1733 / DSM 21960 / TBF 19.5.1).